Reading from the N-terminus, the 31-residue chain is Cliotide T10 (31 aa).

The cyclopeptide (Gly-Asn) cross-link spans 1 to 31 (GIPCGESCVYIPCTVTALLGCSCKDKVCYKN). 3 disulfides stabilise this stretch: cysteine 4–cysteine 21, cysteine 8–cysteine 23, and cysteine 13–cysteine 28.

In terms of processing, contains 3 disulfide bonds. Post-translationally, this is a cyclic peptide. Expressed in seed, root and nodule but not in flower, stem, shoot, leaf and pod (at protein level).

Probably participates in a plant defense mechanism. The protein is Cliotide T10 of Clitoria ternatea (Butterfly pea).